A 94-amino-acid polypeptide reads, in one-letter code: Co-chaperonin GroES (94 aa).

This sequence belongs to the GroES chaperonin family. As to quaternary structure, heptamer of 7 subunits arranged in a ring. Interacts with the chaperonin GroEL.

Its subcellular location is the cytoplasm. Together with the chaperonin GroEL, plays an essential role in assisting protein folding. The GroEL-GroES system forms a nano-cage that allows encapsulation of the non-native substrate proteins and provides a physical environment optimized to promote and accelerate protein folding. GroES binds to the apical surface of the GroEL ring, thereby capping the opening of the GroEL channel. In Staphylococcus carnosus (strain TM300), this protein is Co-chaperonin GroES.